We begin with the raw amino-acid sequence, 187 residues long: Elongation factor P (187 aa).

This sequence belongs to the elongation factor P family.

The protein localises to the cytoplasm. It functions in the pathway protein biosynthesis; polypeptide chain elongation. In terms of biological role, involved in peptide bond synthesis. Stimulates efficient translation and peptide-bond synthesis on native or reconstituted 70S ribosomes in vitro. Probably functions indirectly by altering the affinity of the ribosome for aminoacyl-tRNA, thus increasing their reactivity as acceptors for peptidyl transferase. This Helicobacter pylori (strain G27) protein is Elongation factor P.